A 213-amino-acid chain; its full sequence is NDR1/HIN1-like protein 26 (213 aa).

The Cytoplasmic segment spans residues methionine 1–leucine 27. Residues phenylalanine 28–isoleucine 48 form a helical membrane-spanning segment. At leucine 49–isoleucine 213 the chain is on the lumenal side. Asparagine 67, asparagine 77, and asparagine 195 each carry an N-linked (GlcNAc...) asparagine glycan.

Expressed in the vasculature of roots, rosette leaves, stems, cauline leaves and flowers. Specifically expressed in phloem.

It localises to the cell junction. It is found in the plasmodesma. The protein localises to the endoplasmic reticulum membrane. Functionally, involved in the regulation of sugar, amino acid and some primary metabolite export from companion cells (CCs) to sieve elements (SEs) in phloem. Required for apoplastic phloem sugar loading in source leaves in order to transport it to sink tissues. Required for correct sugar partitioning between source leaves and sink organs. The protein is NDR1/HIN1-like protein 26 of Arabidopsis thaliana (Mouse-ear cress).